Here is a 178-residue protein sequence, read N- to C-terminus: Caveolin-1 (178 aa).

S2 carries the N-acetylserine modification. S2 is subject to Phosphoserine. The interval 2-94 (SGGKYVDSEG…WKASFTTFTV (93 aa)) is required for homooligomerization. At 2-104 (SGGKYVDSEG…TKYWFYRLLS (103 aa)) the chain is on the cytoplasmic side. K5 bears the N6-acetyllysine; alternate mark. Residue K5 forms a Glycyl lysine isopeptide (Lys-Gly) (interchain with G-Cter in ubiquitin); alternate linkage. Y6 carries the post-translational modification Phosphotyrosine. Phosphoserine is present on S9. Phosphotyrosine; by ABL1 is present on Y14. Y25 bears the Phosphotyrosine mark. Glycyl lysine isopeptide (Lys-Gly) (interchain with G-Cter in ubiquitin) cross-links involve residues K26, K30, K39, K47, and K57. Residues 82 to 94 (DGIWKASFTTFTV) are interaction with CAVIN3. The segment at residues 105-125 (ALFGIPMALIWGIYFAILSFL) is an intramembrane region (helical). Residues 126-178 (HIWAVVPCIKSFLIEIQCISRVYSIYVHTFCDPLFEAIGKIFSNIRINTQKEI) are Cytoplasmic-facing. Residues 131 to 142 (VPCIKSFLIEIQ) form an interacts with SPRY1, SPRY2, SPRY3 and SPRY4 region. Residues C133, C143, and C156 are each lipidated (S-palmitoyl cysteine). The segment at 149 to 160 (SIYVHTFCDPLF) is interacts with SPRY1, SPRY2, and SPRY4. Residues 167-178 (FSNIRINTQKEI) are interacts with SPRY1, SPRY2, SPRY3 and SPRY4.

This sequence belongs to the caveolin family. In terms of assembly, homooligomer. Interacts with GLIPR2. Interacts with NOSTRIN. Interacts with SNAP25 and STX1A. Interacts (via the N-terminus) with DPP4; the interaction is direct. Interacts with CTNNB1, CDH1 and JUP. Interacts with PACSIN2; this interaction induces membrane tubulation. Interacts with SLC7A9. Interacts with BMX and BTK. Interacts with TGFBR1. Interacts with CAVIN3 (via leucine-zipper domain) in a cholesterol-sensitive manner. Interacts with CAVIN1. Interacts with EHD2 in a cholesterol-dependent manner. Forms a ternary complex with UBXN6 and VCP; mediates CAV1 targeting to lysosomes for degradation. Interacts with ABCG1; this interaction regulates ABCG1-mediated cholesterol efflux. Interacts with NEU3; this interaction enhances NEU3 sialidase activity within caveola. Interacts (via C-terminus) with SPRY1, SPRY2 (via C-terminus), SPRY3, and SPRY4. Interacts with IGFBP5; this interaction allows trafficking of IGFBP5 from the plasma membrane to the nucleus. Phosphorylated at Tyr-14 by ABL1 in response to oxidative stress. In terms of processing, ubiquitinated. Undergo monoubiquitination and multi- and/or polyubiquitination. Monoubiquitination of N-terminal lysines promotes integration in a ternary complex with UBXN6 and VCP which promotes oligomeric CAV1 targeting to lysosomes for degradation. Ubiquitinated by ZNRF1; leading to degradation and modulation of the TLR4-mediated immune response.

The protein localises to the golgi apparatus membrane. It localises to the cell membrane. It is found in the membrane. Its subcellular location is the caveola. The protein resides in the membrane raft. Functionally, may act as a scaffolding protein within caveolar membranes. Forms a stable heterooligomeric complex with CAV2 that targets to lipid rafts and drives caveolae formation. Mediates the recruitment of CAVIN proteins (CAVIN1/2/3/4) to the caveolae. Interacts directly with G-protein alpha subunits and can functionally regulate their activity. Involved in the costimulatory signal essential for T-cell receptor (TCR)-mediated T-cell activation. Its binding to DPP4 induces T-cell proliferation and NF-kappa-B activation in a T-cell receptor/CD3-dependent manner. Recruits CTNNB1 to caveolar membranes and may regulate CTNNB1-mediated signaling through the Wnt pathway. Negatively regulates TGFB1-mediated activation of SMAD2/3 by mediating the internalization of TGFBR1 from membrane rafts leading to its subsequent degradation. Binds 20(S)-hydroxycholesterol (20(S)-OHC). The sequence is that of Caveolin-1 (CAV1) from Bos taurus (Bovine).